We begin with the raw amino-acid sequence, 342 residues long: MKIDLFDFDLPEELIAQTPLPNRDASRLMVLDKKTGEIRHETFRNILSYLHEGDCLVLNDTRVMPARLYGEKENTGANIEVLLLKQLEGDRWETLVKPAKRVKVGTEITFGDGRLKATCVDTLEHGGRILEFSYQGIFYEVLEQLGEMPLPPYIKEKLDDPERYQTVYAREVGSAAAPTAGLHFTEQLLDDIRAKGVHIAFITLHVGLGTFRPVSVENIEEHDMHAEFYQMTEETARLLNEVRQQGGRIIAVGTTSTRTLETIASKHNGAFVAESGWTDIFIYPGYEFKAIDGLVTNFHLPKSTLIMLVSALAGRENILRAYNAAVKERYRFFSFGDAMLII.

The protein belongs to the QueA family. Monomer.

It localises to the cytoplasm. The catalysed reaction is 7-aminomethyl-7-carbaguanosine(34) in tRNA + S-adenosyl-L-methionine = epoxyqueuosine(34) in tRNA + adenine + L-methionine + 2 H(+). Its pathway is tRNA modification; tRNA-queuosine biosynthesis. Transfers and isomerizes the ribose moiety from AdoMet to the 7-aminomethyl group of 7-deazaguanine (preQ1-tRNA) to give epoxyqueuosine (oQ-tRNA). The protein is S-adenosylmethionine:tRNA ribosyltransferase-isomerase of Geobacillus sp. (strain WCH70).